Consider the following 719-residue polypeptide: Exonuclease mut-7 homolog (719 aa).

Residues 1 to 22 (MSKSNNVAPPCRQDQLGFVPAG) form a disordered region. Residues 575-629 (NLANLVRLCLGKKLDKSNQFSNWAQRPLRKEQLRYAALDAFCLLEIYDAIEKQLT) enclose the 3'-5' exonuclease domain. The disordered stretch occupies residues 644 to 719 (NDVRPPSDSG…FEGPNTKSVL (76 aa)). The segment covering 667-678 (RRNHRDKYNKRH) has biased composition (basic residues). Polar residues-rich tracts occupy residues 683–692 (DSNSGNSSRA) and 706–719 (EQQT…KSVL).

Belongs to the mut-7 family. Requires Mg(2+) as cofactor.

Its function is as follows. Possesses 3'-5' exoribonuclease activity. Required for 3'-end trimming of AGO1-bound miRNAs. The sequence is that of Exonuclease mut-7 homolog from Aedes aegypti (Yellowfever mosquito).